Here is a 365-residue protein sequence, read N- to C-terminus: MVRPVFDAAVLSGRSDIPSQFIWPEGESPTPDAAEELHVPLINIGGMLSGDAAAAAEVTRLVGEACERHGFFQVVNHGIDAELLADAHRCVDNFFTMPLPEKQRALRRPGESCGYASSFTGRFASKLPWKETLSFRSCPSDPALVVDYIVATLGEDHRRLGEVYARYCSEMSRLSLEIMEVLGESLGVGRAHYRRFFEGNDSIMRLNYYPPCQRPLETLGTGPHCDPTSLTILHQDNVGGLQVHTEGRWRSIRPRADAFVVNIGDTFMALSNGRYKSCLHRAVVNSRVPRKSLAFFLCPEMDKVVAPPGTLVDASNPRAYPDFTWRSLLDFTQKHYRADMKTLEVFSSWIVQQQQGQLALQPAMT.

The Fe2OG dioxygenase domain occupies 199 to 299; it reads GNDSIMRLNY…RKSLAFFLCP (101 aa). Residues His224, Asp226, and His280 each coordinate Fe cation. Arg290 is a catalytic residue.

The protein belongs to the iron/ascorbate-dependent oxidoreductase family. GA20OX subfamily. Requires Fe cation as cofactor. The cofactor is L-ascorbate. As to expression, expressed in nodes and the ear of the elongating stem.

It carries out the reaction gibberellin A12 + 2 2-oxoglutarate + 3 O2 + H(+) = gibberellin A9 + 2 succinate + 3 CO2 + 2 H2O. It catalyses the reaction gibberellin A53 + 2 2-oxoglutarate + 3 O2 + H(+) = gibberellin A20 + 2 succinate + 3 CO2 + 2 H2O. Functionally, key oxidase enzyme in the biosynthesis of gibberellin that catalyzes the conversion of GA12 and GA53 to GA9 and GA20 respectively, via a three-step oxidation at C-20 of the GA skeleton. The polypeptide is Gibberellin 20 oxidase 1-A (GA20ox1A) (Triticum aestivum (Wheat)).